Reading from the N-terminus, the 1026-residue chain is MIKNTAKNKNGIITRATIDLKKDLKFVKLTAVSNLAVQNGEMLAAVTEKLLVHYSEGTGERHQEMSLPLNGPDHVAYIHLSRTGFHAIVSSKLGHNFYIHLKSNAFHHLKKLRCVVTAVGWNPDYSKETDTTGPILLGTAQGSIIELNVGSTGMMTTLKELTSQVAQIAEQRITSAPSPAAAITDIQLFQLADDDPKNKKWMVIIAQMARLIVLITDNEPAPVVKLGGFTSSASLQAGLMNLATEQAPSTTFHSFFTSPNTLQHTISSSKFSEKFKNHGFLTMHPTIAEPKRYAWLSPDGISIGNVNIYAERIQDVLVEEFNIEHRLIEGRLEPPTGIALTDYHVLLAYSSRVLALSLLPPHDVIFEDPWNPELGGALGFVSDNVAEFVWLYTQTFAMKYGTNDEARYIWKTYLDRGEYQKALQIARTRVAIEPDALEMVLRKQADFYIQEKNFTAAAEILAQSSEPFESVVLKFLTNSSERKMGLKTLLDKKLERLTRHEDKIRRDALVMWLLNVQLEELAEMRRLKNSNPDPAFVEKLRDTTDHVQRYFMRKNVIESIQTNRDAVYRMCVAHADFEMQLFFANAVKDLRTVIDILMLREQYFEVLEVLKNQRISELTYEMCPLLIEHIPKQVIVYLIQNQDQISPQKLTPCLSLCVKNMEMAIPAIKYLEAQFKGTQTISQNPQNLANLHNIYIHLMAKFRREKLLGYLESHGTIRSDLPYELDFAMRTCEQFKIEPCVVYLFCVAGMFGDAVEKALGFDVDLAKKCALMMEEAEANFAWLEGMEDPAATSYIRQKLDEKAKKAIWLKIGQYYVTQENNVDKCIELINESNHLLTIQDLLPIIPKFTRVGALKPIIVDFLKRNKQRLEKLERSMKEATEIASEIRDKQEKLKNRTTVVKPSDVCSHCARPISGRAFNVHSCRHFFHRECLEIAMISFLSQEEVEKMKTLIIDEERVLSQMKAEQLAGNQKGFIEKQEKYLKIAAFISNIVGAECPLCGNIAISQIDKQFLSDEEFAADLNTWLL.

A coiled-coil region spans residues 858 to 896; that stretch reads IVDFLKRNKQRLEKLERSMKEATEIASEIRDKQEKLKNR. The segment at 906–932 adopts an RING-type; degenerate zinc-finger fold; it reads CSHCARPISGRAFNVHSCRHFFHRECL.

In terms of assembly, probable core component of at least two putative endosomal tethering complexes, the homotypic fusion and vacuole protein sorting (HOPS) complex and the class C core vacuole/endosome tethering (CORVET) complex. Their common core is composed of the class C Vps proteins vps-11, vps-16 and vps-18, which in HOPS further associates with vps-33.1, vps-39 and vps-41 and in CORVET with vps-8 and vps-33.2. In terms of tissue distribution, in hermaphrodites, expressed in coelomocytes and gonadal sheath cells.

The protein localises to the cytoplasm. The protein resides in the late endosome membrane. Its subcellular location is the lysosome membrane. It localises to the early endosome. It is found in the cytoplasmic vesicle. The protein localises to the autophagosome. The protein resides in the clathrin-coated vesicle. Plays a role in vesicle-mediated protein trafficking to lysosomal compartments including the endocytic membrane transport and autophagic pathways. Believed to act as a core component of the putative HOPS and CORVET endosomal tethering complexes which are proposed to be involved in the rab-5-to-rab-7 endosome conversion probably implicating sand-1, and via binding SNAREs and SNARE complexes to mediate tethering and docking events during SNARE-mediated membrane fusion. The HOPS complex is proposed to be recruited to rab-7 on the late endosomal membrane and to regulate late endocytic, phagocytic and autophagic traffic towards lysosomes. Within the HOPS complex, contributes to the normal development of gut granules in intestinal cells of the embryo, and also promotes the trafficking of embryonic intestinal gut granules away from lysosomes. The CORVET complex is proposed to function as a rab-5 effector to mediate early endosome fusion probably in specific endosome subpopulations. Required for fusion of endosomes and autophagosomes with lysosomes. Plays a role in the degradation of apoptotic cells during programmed cell death. In Caenorhabditis elegans, this protein is Vacuolar protein sorting-associated protein 18 homolog.